Here is a 157-residue protein sequence, read N- to C-terminus: Iron-sulfur cluster repair protein DnrN (157 aa).

It belongs to the RIC family.

It localises to the cytoplasm. Functionally, di-iron-containing protein involved in the repair of iron-sulfur clusters damaged by oxidative and nitrosative stress conditions. Required to repair damage caused by nitric oxide to FNR and NsrR transcription factors. This chain is Iron-sulfur cluster repair protein DnrN (dnrN), found in Neisseria gonorrhoeae.